We begin with the raw amino-acid sequence, 248 residues long: MRTPIIAGNWKMNNTISESLKLIEELKPLVKDAKAEVVVAPTAVSLETVVNATKGSNIKVAAQNAHFEESGAFTGEISLKALEELGVSYVILGHSERRQYFNETDCALNKKVKAAFAHNITPILCCGETLEEREANVTNEVTGKQIKLDLAGLSAEQAAKVVIAYEPIWAIGTGKTATDEQANETIGAIRKTVEVMFGKEVAEKVRIQYGGSVKPNTIKAQMAKPEIDGALVGGASLKAADFAAIVNF.

Residue 9 to 11 (NWK) participates in substrate binding. Histidine 94 acts as the Electrophile in catalysis. Glutamate 166 serves as the catalytic Proton acceptor. Substrate is bound by residues glycine 172, serine 212, and 233-234 (GG).

Belongs to the triosephosphate isomerase family. Homodimer.

Its subcellular location is the cytoplasm. The enzyme catalyses D-glyceraldehyde 3-phosphate = dihydroxyacetone phosphate. It participates in carbohydrate biosynthesis; gluconeogenesis. The protein operates within carbohydrate degradation; glycolysis; D-glyceraldehyde 3-phosphate from glycerone phosphate: step 1/1. Involved in the gluconeogenesis. Catalyzes stereospecifically the conversion of dihydroxyacetone phosphate (DHAP) to D-glyceraldehyde-3-phosphate (G3P). The polypeptide is Triosephosphate isomerase (Clostridium acetobutylicum (strain ATCC 824 / DSM 792 / JCM 1419 / IAM 19013 / LMG 5710 / NBRC 13948 / NRRL B-527 / VKM B-1787 / 2291 / W)).